A 281-amino-acid chain; its full sequence is Nucleotide-binding protein Patl_0571 (281 aa).

8 to 15 lines the ATP pocket; that stretch reads GRSGSGKS. Position 56-59 (56-59) interacts with GTP; sequence DVRN.

This sequence belongs to the RapZ-like family.

In terms of biological role, displays ATPase and GTPase activities. This is Nucleotide-binding protein Patl_0571 from Pseudoalteromonas atlantica (strain T6c / ATCC BAA-1087).